The sequence spans 180 residues: Large ribosomal subunit protein uL6c (180 aa).

The protein belongs to the universal ribosomal protein uL6 family. Part of the 50S ribosomal subunit.

Its subcellular location is the plastid. The protein resides in the chloroplast. Binds 23S rRNA. The sequence is that of Large ribosomal subunit protein uL6c (rpl6) from Porphyra purpurea (Red seaweed).